Here is a 167-residue protein sequence, read N- to C-terminus: 6,7-dimethyl-8-ribityllumazine synthase (167 aa).

5-amino-6-(D-ribitylamino)uracil-binding positions include Phe24, 58-60 (ALE), and 82-84 (AVV). Residue 87-88 (ET) participates in (2S)-2-hydroxy-3-oxobutyl phosphate binding. Catalysis depends on His90, which acts as the Proton donor. Asn115 is a binding site for 5-amino-6-(D-ribitylamino)uracil. Arg129 is a (2S)-2-hydroxy-3-oxobutyl phosphate binding site.

It belongs to the DMRL synthase family.

The enzyme catalyses (2S)-2-hydroxy-3-oxobutyl phosphate + 5-amino-6-(D-ribitylamino)uracil = 6,7-dimethyl-8-(1-D-ribityl)lumazine + phosphate + 2 H2O + H(+). The protein operates within cofactor biosynthesis; riboflavin biosynthesis; riboflavin from 2-hydroxy-3-oxobutyl phosphate and 5-amino-6-(D-ribitylamino)uracil: step 1/2. Catalyzes the formation of 6,7-dimethyl-8-ribityllumazine by condensation of 5-amino-6-(D-ribitylamino)uracil with 3,4-dihydroxy-2-butanone 4-phosphate. This is the penultimate step in the biosynthesis of riboflavin. In Cupriavidus pinatubonensis (strain JMP 134 / LMG 1197) (Cupriavidus necator (strain JMP 134)), this protein is 6,7-dimethyl-8-ribityllumazine synthase.